A 657-amino-acid chain; its full sequence is Probable intron-encoded endonuclease aI2 (657 aa).

Residues 1–245 (MKQMSYVTRW…TYEHLFWFFG (245 aa)) form a COX1 exons 1 to 2 encoded region. The next 6 helical transmembrane spans lie at 19–39 (IGMT…GMSV), 69–89 (LLMM…NFFL), 103–123 (LNNI…CSVL), 152–172 (AMFA…NFMV), 188–208 (PLFA…LPVL), and 269–289 (MYFI…ANMV). A COX1 intron 2 encoded region spans residues 246-657 (QWWPTNYVNN…KFENKWNKKF (412 aa)).

In the C-terminal section; belongs to the LAGLIDADG endonuclease family. The protein in the N-terminal section; belongs to the heme-copper respiratory oxidase family. The mature protein may arise from proteolytic cleavage of an in-frame translation of COX1 exons 1 and 2 plus intron 2, containing the aI2 open reading frame.

Its subcellular location is the mitochondrion. The protein localises to the membrane. Mitochondrial DNA endonuclease involved in intron homing. This Debaryomyces hansenii (strain ATCC 36239 / CBS 767 / BCRC 21394 / JCM 1990 / NBRC 0083 / IGC 2968) (Yeast) protein is Probable intron-encoded endonuclease aI2 (aI2).